The following is a 1020-amino-acid chain: MREPEELMPDSGAVFTFGKSKFAENNPGKFWFKNDVPVHLSCGDEHSAVVTGNNKLYMFGSNNWGQLGLGSKSAISKPTCVKALKPEKVKLAACGRNHTLVSTEGGNVYATGGNNEGQLGLGDTEERNTFHVISFFTSEHKIKQLSAGSNTSAALTEDGRLFMWGDNSEGQIGLKNVSNVCVPQQVTIGKPVSWISCGYYHSAFVTTDGELYVFGEPENGKLGLPNQLLGNHRTPQLVSEIPEKVIQVACGGEHTVVLTENAVYTFGLGQFGQLGLGTFLFETSEPKVIENIRDQTISYISCGENHTALITDIGLMYTFGDGRHGKLGLGLENFTNHFIPTLCSNFLRFIVKLVACGGCHMVVFAAPHRGVAKEIEFDEINDTCLSVATFLPYSSLTSGNVLQRTLSARMRRRERERSPDSFSMRRTLPPIEGTLGLSACFLPNSVFPRCSERNLQESVLSEQDLMQPEEPDYLLDEMTKEAEIDNSSTVESLGETTDILNMTHIMSLNSNEKSLKLSPVQKQKKQQTIGELTQDTALTENDDSDEYEEMSEMKEGKACKQHVSQGIFMTQPATTIEAFSDEEVGNDTGQVGPQADTDGEGLQKEVYRHENNNGVDQLDAKEIEKESDGGHSQKESEAEEIDSEKETKLAEIAGMKDLREREKSTKKMSPFFGNLPDRGMNTESEENKDFVKKRESCKQDVIFDSERESVEKPDSYMEGASESQQGIADGFQQPEAIEFSSGEKEDDEVETDQNIRYGRKLIEQGNEKETKPIISKSMAKYDFKCDRLSEIPEEKEGAEDSKGNGIEEQEVEANEENVKVHGGRKEKTEILSDDLTDKAEDHEFSKTEELKLEDVDEEINAENVESKKKTVGDDESVPTGYHSKTEGAERTNDDSSAETIEKKEKANLEERAICEYNENPKGYMLDDADSSSLEILENSETTPSKDMKKTKKIFLFKRVPSINQKIVKNNNEPLPEIKSIGDQIILKSDNKDADQNHMSQNHQNIPPTNTERRSKSCTIL.

RCC1 repeat units lie at residues 54–105 (NKLY…STEG), 106–158 (GNVY…LTED), 159–208 (GRLF…VTTD), 209–261 (GELY…LTEN), 262–313 (AVYT…ITDI), and 314–367 (GLMY…FAAP). 2 positions are modified to phosphoserine: Ser-418 and Ser-518. Disordered stretches follow at residues 609 to 776 (HENN…IISK), 790 to 906 (EIPE…KEKA), and 989 to 1020 (DNKD…CTIL). Composition is skewed to basic and acidic residues over residues 618–636 (LDAK…QKES), 644–665 (EKET…EKST), 685–698 (EENK…ESCK), 704–715 (DSERESVEKPDS), 760–771 (KLIEQGNEKETK), 790–802 (EIPE…EDSK), 816–853 (ENVK…LKLE), and 883–906 (SKTE…KEKA). Positions 996-1009 (NHMSQNHQNIPPTN) are enriched in polar residues. Position 1017 is a cysteine methyl ester (Cys-1017). Cys-1017 carries the S-geranylgeranyl cysteine lipid modification. A propeptide spans 1018–1020 (TIL) (removed in mature form).

Interacts with SPATA7. Interacts with CEP290. Interacts with WHRN. Interacts with PDE6D. Interacts with RPGRIP1. Interacts with RPGRIP1L. PDE6D, RPGRIP1 and RPGRIP1L may compete for the same binding sites. Interacts with RAB37 and RAB8A (in GDP-bound forms); functions as GEF for RAB37 and RAB8A. In terms of assembly, isoform 6 interacts with NPM1 (via C-terminus). Isoform 6 interacts with SMC1A and SMC3. Post-translationally, prenylated. In terms of tissue distribution, heart, brain, placenta, lung, liver, muscle, kidney, retina, pancreas and fetal retinal pigment epithelium. Isoform 3 is found only in the retina. Colocalizes with RPGRIP1 in the outer segment of rod photoreceptors and cone outer segments.

The protein resides in the cytoplasm. It localises to the cytoskeleton. Its subcellular location is the flagellum axoneme. It is found in the golgi apparatus. The protein localises to the cell projection. The protein resides in the cilium. It localises to the microtubule organizing center. Its subcellular location is the centrosome. It is found in the cilium basal body. The protein localises to the cilium axoneme. In terms of biological role, acts as a guanine-nucleotide releasing factor (GEF) for RAB8A and RAB37 by promoting the conversion of inactive RAB-GDP to the active form RAB-GTP. GEF activity towards RAB8A may facilitate ciliary trafficking by modulating ciliary intracellular localization of RAB8A. GEF activity towards RAB37 maintains autophagic homeostasis and retinal function. Involved in photoreceptor integrity. May control cilia formation by regulating actin stress filaments and cell contractility. May be involved in microtubule organization and regulation of transport in primary cilia. May play a critical role in spermatogenesis and in intraflagellar transport processes. The protein is X-linked retinitis pigmentosa GTPase regulator of Homo sapiens (Human).